Consider the following 335-residue polypeptide: Mitochondrial carrier protein CoAc2 (335 aa).

6 helical membrane passes run 12 to 32 (SGPG…AGGV), 75 to 95 (FYRG…LHYM), 119 to 139 (LVAG…LDLV), 187 to 207 (GMAP…YFYE), 225 to 242 (LGCG…TYPL), and 280 to 302 (LFSG…FTVY). Solcar repeat units follow at residues 17–103 (PLAV…YRRW), 113–212 (QGPV…MKSH), and 219–308 (KGII…MKVC).

This sequence belongs to the mitochondrial carrier (TC 2.A.29) family. As to expression, expressed throughout the plant.

Its subcellular location is the mitochondrion inner membrane. In terms of biological role, required for the accumulation of coenzyme A in the mitochondrial matrix. In Zea mays (Maize), this protein is Mitochondrial carrier protein CoAc2.